The chain runs to 883 residues: AP-5 complex subunit beta-1 (883 aa).

As to quaternary structure, probably part of the adaptor protein complex 5 (AP-5).

As part of AP-5, a probable fifth adaptor protein complex, it may be involved in endosomal transport. The polypeptide is AP-5 complex subunit beta-1 (ap5b1) (Xenopus tropicalis (Western clawed frog)).